The sequence spans 183 residues: Adenine phosphoribosyltransferase (183 aa).

Belongs to the purine/pyrimidine phosphoribosyltransferase family. Homodimer.

It is found in the cytoplasm. It carries out the reaction AMP + diphosphate = 5-phospho-alpha-D-ribose 1-diphosphate + adenine. Its pathway is purine metabolism; AMP biosynthesis via salvage pathway; AMP from adenine: step 1/1. Functionally, catalyzes a salvage reaction resulting in the formation of AMP, that is energically less costly than de novo synthesis. This chain is Adenine phosphoribosyltransferase, found in Proteus mirabilis (strain HI4320).